The sequence spans 245 residues: Adenosine 5'-phosphosulfate reductase (245 aa).

Positions 124, 125, 205, and 208 each coordinate [4Fe-4S] cluster. The Nucleophile; cysteine thiosulfonate intermediate role is filled by cysteine 231.

Belongs to the PAPS reductase family. CysH subfamily. [4Fe-4S] cluster is required as a cofactor.

It is found in the cytoplasm. The catalysed reaction is [thioredoxin]-disulfide + sulfite + AMP + 2 H(+) = adenosine 5'-phosphosulfate + [thioredoxin]-dithiol. The protein operates within sulfur metabolism; hydrogen sulfide biosynthesis; sulfite from sulfate. Catalyzes the formation of sulfite from adenosine 5'-phosphosulfate (APS) using thioredoxin as an electron donor. This is Adenosine 5'-phosphosulfate reductase from Chelativorans sp. (strain BNC1).